The chain runs to 546 residues: MKRNGIVSALCFIGFLAAEAPDISVAEALVLLSILFFVPGIFPFVFRQSPVRAAQFMENGLIQCYPVAAFFAVLALVTEVGGFALIWWMYTVFNALYAILRLWETKIHRIEETSVLFGLIYLAGGGFWFFAYAAHLQIMQFGPLIILLTAVHFHYSAFLIPIFNGLLGRTIRKHRMLYSWITWVILLSPLLIALGITYSKTLDVIAVSIYMAAIYLHAFLVFTAAFRTKTGTFLIRLSSAVLMITIAFSMIYSFGVFRQEVTLTINQMIWIHGFVNAFGVILPALIGWRIEDAKPFDADSVKTFSRIYGKRKIGEEFLANIQAENNARYSGLVDDMGSLRSKDFSPEKLAPLILSFYEQTIEYNIKAKVTWSTWFRPLAIIYEWFSRRIGQIHLSTNPDWYRMYSKIKGVHSKKDGRERVRAWIRTNEKNETIFTALYSVYRSNGEGYMNISLPLPFSSMTGILKPYHHQEKLVLTSRRRKSRAGDEGIYLQTRAGTCPLPLSETFLIEAVHDNKLTAVHHMWLFGIKFLTVHYSITHINQPIERT.

9 consecutive transmembrane segments (helical) span residues 27-46, 59-78, 83-100, 114-134, 143-163, 176-196, 204-224, 237-257, and 268-288; these read EALV…PFVF, NGLI…ALVT, FALI…YAIL, SVLF…AYAA, PLII…IPIF, MLYS…ALGI, VIAV…VFTA, LSSA…FGVF, and MIWI…LIGW.

It is found in the cell membrane. This is an uncharacterized protein from Bacillus subtilis (strain 168).